The sequence spans 299 residues: GTPase Era (299 aa).

The Era-type G domain maps to 5–175; sequence RSGFVCFVGR…TDVLAGKLPP (171 aa). The segment at 13–20 is G1; that stretch reads GRPNTGKS. 13–20 is a binding site for GTP; it reads GRPNTGKS. The tract at residues 39–43 is G2; it reads QTTRH. The G3 stretch occupies residues 60-63; that stretch reads DTPG. Residues 60 to 64 and 124 to 127 each bind GTP; these read DTPGL and TKID. The G4 stretch occupies residues 124–127; it reads TKID. Residues 154–156 form a G5 region; sequence VSA. One can recognise a KH type-2 domain in the interval 206–285; it reads VRDELPHSLA…YLDLRVKIAK (80 aa).

It belongs to the TRAFAC class TrmE-Era-EngA-EngB-Septin-like GTPase superfamily. Era GTPase family. Monomer.

The protein localises to the cell envelope. It is found in the secreted. Its subcellular location is the cell wall. Its function is as follows. Exhibits GTPase activity. Binds RNA but is probably not involved in ribosome assembly in mycobacteria. The sequence is that of GTPase Era from Mycobacterium sp. (strain KMS).